A 261-amino-acid polypeptide reads, in one-letter code: Hydroxyethylthiazole kinase (261 aa).

Methionine 38 provides a ligand contact to substrate. Residues arginine 114 and threonine 159 each coordinate ATP. Glycine 186 provides a ligand contact to substrate.

Belongs to the Thz kinase family. It depends on Mg(2+) as a cofactor.

The catalysed reaction is 5-(2-hydroxyethyl)-4-methylthiazole + ATP = 4-methyl-5-(2-phosphooxyethyl)-thiazole + ADP + H(+). The protein operates within cofactor biosynthesis; thiamine diphosphate biosynthesis; 4-methyl-5-(2-phosphoethyl)-thiazole from 5-(2-hydroxyethyl)-4-methylthiazole: step 1/1. Its function is as follows. Catalyzes the phosphorylation of the hydroxyl group of 4-methyl-5-beta-hydroxyethylthiazole (THZ). This chain is Hydroxyethylthiazole kinase, found in Halalkalibacterium halodurans (strain ATCC BAA-125 / DSM 18197 / FERM 7344 / JCM 9153 / C-125) (Bacillus halodurans).